Consider the following 166-residue polypeptide: Regulatory protein RecX (166 aa).

The protein belongs to the RecX family.

Its subcellular location is the cytoplasm. In terms of biological role, modulates RecA activity. This Shigella sonnei (strain Ss046) protein is Regulatory protein RecX.